We begin with the raw amino-acid sequence, 97 residues long: Exodeoxyribonuclease 7 small subunit (97 aa).

The disordered stretch occupies residues 64–97 (NGQLHPAEEKGDDVSNNGVQNQGYKSQFLDGDVF). A compositionally biased stretch (polar residues) spans 77-88 (VSNNGVQNQGYK).

It belongs to the XseB family. Heterooligomer composed of large and small subunits.

It localises to the cytoplasm. It catalyses the reaction Exonucleolytic cleavage in either 5'- to 3'- or 3'- to 5'-direction to yield nucleoside 5'-phosphates.. In terms of biological role, bidirectionally degrades single-stranded DNA into large acid-insoluble oligonucleotides, which are then degraded further into small acid-soluble oligonucleotides. This Limosilactobacillus fermentum (strain NBRC 3956 / LMG 18251) (Lactobacillus fermentum) protein is Exodeoxyribonuclease 7 small subunit.